The primary structure comprises 227 residues: Thymidylate kinase (227 aa).

An ATP-binding site is contributed by 7–14 (GIEGSGKT).

This sequence belongs to the thymidylate kinase family.

It catalyses the reaction dTMP + ATP = dTDP + ADP. Its function is as follows. Phosphorylation of dTMP to form dTDP in both de novo and salvage pathways of dTTP synthesis. The polypeptide is Thymidylate kinase (Desulforapulum autotrophicum (strain ATCC 43914 / DSM 3382 / VKM B-1955 / HRM2) (Desulfobacterium autotrophicum)).